A 238-amino-acid chain; its full sequence is Uridylate kinase (238 aa).

An ATP-binding site is contributed by 12 to 15 (KLSG). A UMP-binding site is contributed by glycine 54. Glycine 55 and arginine 59 together coordinate ATP. Residues aspartate 74 and 135 to 142 (TGNPYFTT) each bind UMP. The ATP site is built by threonine 162, asparagine 163, tyrosine 168, and aspartate 171.

Belongs to the UMP kinase family. In terms of assembly, homohexamer.

It is found in the cytoplasm. The catalysed reaction is UMP + ATP = UDP + ADP. It functions in the pathway pyrimidine metabolism; CTP biosynthesis via de novo pathway; UDP from UMP (UMPK route): step 1/1. Inhibited by UTP. Catalyzes the reversible phosphorylation of UMP to UDP. This is Uridylate kinase from Nitrobacter hamburgensis (strain DSM 10229 / NCIMB 13809 / X14).